Here is a 161-residue protein sequence, read N- to C-terminus: Nucleotide-binding protein lpl1175 (161 aa).

This sequence belongs to the YajQ family.

Its function is as follows. Nucleotide-binding protein. The protein is Nucleotide-binding protein lpl1175 of Legionella pneumophila (strain Lens).